Here is a 325-residue protein sequence, read N- to C-terminus: Putative gluconeogenesis factor (325 aa).

The protein belongs to the gluconeogenesis factor family.

It is found in the cytoplasm. Functionally, required for morphogenesis under gluconeogenic growth conditions. This chain is Putative gluconeogenesis factor, found in Streptococcus pneumoniae serotype 4 (strain ATCC BAA-334 / TIGR4).